The following is a 773-amino-acid chain: Probable C-mannosyltransferase DPY19L2 (773 aa).

Positions 1-45 (MVGPTRSKLREGSSDRPQSSCTGQARRRWSAATMEPQQERSAPQE) are disordered. Residues 1-122 (MVGPTRSKLR…ALQMHRFSHR (122 aa)) lie on the Nuclear side of the membrane. A helical transmembrane segment spans residues 123–143 (TLFGLAIFVGILHWLHLITLF). The Perinuclear space segment spans residues 144–209 (ENDHHFSHLS…INTVKRFHLY (66 aa)). A helical transmembrane segment spans residues 210–230 (PEVVIAYWYRTIIGIMNLFGI). The Nuclear segment spans residues 231 to 256 (ETKTCWNVTRMEPLNEVQSCEGLGDP). Residues 257–277 (ACFYIGVIFILNGLMMGLFFI) traverse the membrane as a helical segment. Residues 278 to 311 (YSTYLSGSQLGGLITVACYFFNHGEATRVMWTPP) are Perinuclear space-facing. A helical transmembrane segment spans residues 312-332 (LRESFSYPFLVLQMYILTIIL). Residues 333–358 (RTSTVHKKHYMALCFSNVAFMLPWQF) are Nuclear-facing. A helical transmembrane segment spans residues 359–379 (AQFILFTQIASLFPMYVVGYI). Residues 380-386 (EPSKFQK) are Perinuclear space-facing. Residues 387-407 (IIYVNMSSVALCFILMFGNSM) form a helical membrane-spanning segment. Topologically, residues 408–437 (YLSSYYSSCLLVTWAIMQKKSKIQKLGGTE) are nuclear. The chain crosses the membrane as a helical span at residues 438 to 458 (LQFWLIQGCFWWCGTIILKFL). Over 459–507 (TSKICGVSDHIRLSDLIAARILRYTDFDTLIYTCAPEFDFMEQATPLRY) the chain is Perinuclear space. The chain crosses the membrane as a helical span at residues 508-528 (IKTLLLPLILVITYLIFKKIV). The Nuclear segment spans residues 529 to 548 (RDIMCVLYTNTYVRKQLLDN). Residues 549–569 (AELIFHTLQLLAFTGLAILIM) form a helical membrane-spanning segment. The Perinuclear space segment spans residues 570 to 590 (RLKLFLTPHMCIMASLICSQR). Residues 591 to 611 (LFGWLFCRIHFENVVFGILTM) form a helical membrane-spanning segment. At 612–773 (MSIQGCANLH…NSMYRVLKIN (162 aa)) the chain is on the nuclear side.

This sequence belongs to the dpy-19 family. In terms of assembly, interacts with FAM209. Predominantly expressed in testis. Present in testis but absent from epididymal sperm (at protein level).

It is found in the nucleus inner membrane. Its function is as follows. Probable C-mannosyltransferase that mediates C-mannosylation of tryptophan residues on target proteins. In terms of biological role, required during spermatogenesis for sperm head elongation and acrosome formation. Also plays a role in acrosome attachment to the nuclear envelope. This Mus musculus (Mouse) protein is Probable C-mannosyltransferase DPY19L2 (Dpy19l2).